A 507-amino-acid chain; its full sequence is Fatty acid resistance protein FarB (507 aa).

The next 14 helical transmembrane spans lie at 8–28 (GAALAWVTLSLGLAVFMEVLD), 52–72 (WVITSFSVANAVSVPLTGFLA), 78–98 (VKLFTAAAAGFVIASWLCGIA), 109–129 (ILQGFIAGPLIPLSQSLLMAS), 136–156 (MLALALWAMTVVVAPVLGPIL), 164–184 (WHWGWIFFINIPIGIISAWIT), 199–219 (PTDYVGLTLMMVGIGALQMML), 233–253 (IITLGITALVCLSYFIVWELG), 274–294 (IATSLGFMVYMGTLTLLPLVL), 303–323 (AWAGLAAAPVGILPVFLSPLI), 334–354 (LLVTASFLTFAFTFYWRTDFY), 363–383 (IWPQFWQGVGVAMFFLPLTTI), 399–419 (LSNFLRVLMGGVGVSVVSTLW), and 478–498 (IFLAGSILFIVLIPIVWLAKP).

It belongs to the major facilitator superfamily. EmrB family. As to quaternary structure, probably part of a tripartite efflux system FarAB-MtrE, which is composed of an inner membrane transporter, FarB, a periplasmic membrane fusion protein, FarA, and an outer membrane component, MtrE.

The protein resides in the cell inner membrane. Its function is as follows. Mediates resistance to long-chained antibacterial fatty acids (FAs). Function is dependent on the MtrE outer membrane protein. This Neisseria gonorrhoeae protein is Fatty acid resistance protein FarB.